The primary structure comprises 570 residues: Dihydroxy-acid dehydratase (570 aa).

Residue cysteine 61 coordinates [2Fe-2S] cluster. Aspartate 94 is a binding site for Mg(2+). Cysteine 135 contributes to the [2Fe-2S] cluster binding site. Positions 136 and 137 each coordinate Mg(2+). At lysine 137 the chain carries N6-carboxylysine. Cysteine 207 provides a ligand contact to [2Fe-2S] cluster. Glutamate 459 contacts Mg(2+). Residue serine 485 is the Proton acceptor of the active site.

This sequence belongs to the IlvD/Edd family. In terms of assembly, homodimer. The cofactor is [2Fe-2S] cluster. Requires Mg(2+) as cofactor.

The enzyme catalyses (2R)-2,3-dihydroxy-3-methylbutanoate = 3-methyl-2-oxobutanoate + H2O. The catalysed reaction is (2R,3R)-2,3-dihydroxy-3-methylpentanoate = (S)-3-methyl-2-oxopentanoate + H2O. Its pathway is amino-acid biosynthesis; L-isoleucine biosynthesis; L-isoleucine from 2-oxobutanoate: step 3/4. The protein operates within amino-acid biosynthesis; L-valine biosynthesis; L-valine from pyruvate: step 3/4. In terms of biological role, functions in the biosynthesis of branched-chain amino acids. Catalyzes the dehydration of (2R,3R)-2,3-dihydroxy-3-methylpentanoate (2,3-dihydroxy-3-methylvalerate) into 2-oxo-3-methylpentanoate (2-oxo-3-methylvalerate) and of (2R)-2,3-dihydroxy-3-methylbutanoate (2,3-dihydroxyisovalerate) into 2-oxo-3-methylbutanoate (2-oxoisovalerate), the penultimate precursor to L-isoleucine and L-valine, respectively. The protein is Dihydroxy-acid dehydratase of Lactococcus lactis subsp. lactis (strain IL1403) (Streptococcus lactis).